The sequence spans 126 residues: Small ribosomal subunit protein uS13 (126 aa).

A disordered region spans residues 91–126 (HRAGLPVRGQRTRTNSRTRRSAKRTVAGKKKAPSKK). The segment covering 100-126 (QRTRTNSRTRRSAKRTVAGKKKAPSKK) has biased composition (basic residues).

It belongs to the universal ribosomal protein uS13 family. As to quaternary structure, part of the 30S ribosomal subunit. Forms a loose heterodimer with protein S19. Forms two bridges to the 50S subunit in the 70S ribosome.

Located at the top of the head of the 30S subunit, it contacts several helices of the 16S rRNA. In the 70S ribosome it contacts the 23S rRNA (bridge B1a) and protein L5 of the 50S subunit (bridge B1b), connecting the 2 subunits; these bridges are implicated in subunit movement. Contacts the tRNAs in the A and P-sites. The protein is Small ribosomal subunit protein uS13 of Acaryochloris marina (strain MBIC 11017).